A 250-amino-acid chain; its full sequence is Endomucin (250 aa).

The N-terminal stretch at 1–20 (MRLLQVTALFFLLSNSLCRG) is a signal peptide. 2 stretches are compositionally biased toward low complexity: residues 24-38 (KALT…SATT) and 45-60 (TNKS…TTNS). Disordered regions lie at residues 24 to 83 (KALT…ETTT) and 105 to 153 (NAVS…LTTA). N-linked (GlcNAc...) asparagine glycans are attached at residues asparagine 46, asparagine 115, and asparagine 119. 2 stretches are compositionally biased toward polar residues: residues 105–135 (NAVS…NQLP) and 143–153 (TETPSASLTTA). Residues 180 to 200 (VILPVVIALIVITVLVFTLVG) form a helical membrane-spanning segment. The disordered stretch occupies residues 210–250 (PGTPESGNDQPQSDKESVKLLTVKTISHESGEHSAQGKAKN). Serine 226 bears the Phosphoserine mark.

Highly O-glycosylated. Sialic acid-rich glycoprotein.

The protein resides in the membrane. Functionally, endothelial sialomucin, also called endomucin or mucin-like sialoglycoprotein, which interferes with the assembly of focal adhesion complexes and inhibits interaction between cells and the extracellular matrix. The polypeptide is Endomucin (Emcn) (Rattus norvegicus (Rat)).